The primary structure comprises 296 residues: Mycothiol acetyltransferase (296 aa).

N-acetyltransferase domains are found at residues 1-148 (MTEW…IRVD) and 151-296 (VTVR…YGRA). Position 34 (Glu34) interacts with 1D-myo-inositol 2-(L-cysteinylamino)-2-deoxy-alpha-D-glucopyranoside. Acetyl-CoA is bound by residues 79–81 (LVV) and 87–92 (RRGIGS). 1D-myo-inositol 2-(L-cysteinylamino)-2-deoxy-alpha-D-glucopyranoside is bound by residues Glu178, Lys219, and Glu229. Residues 233 to 235 (VGV) and 240 to 246 (QGRGLGH) contribute to the acetyl-CoA site. 1D-myo-inositol 2-(L-cysteinylamino)-2-deoxy-alpha-D-glucopyranoside is bound at residue Tyr267. An acetyl-CoA-binding site is contributed by 272 to 277 (NQAALR).

Belongs to the acetyltransferase family. MshD subfamily. In terms of assembly, monomer.

The enzyme catalyses 1D-myo-inositol 2-(L-cysteinylamino)-2-deoxy-alpha-D-glucopyranoside + acetyl-CoA = mycothiol + CoA + H(+). Catalyzes the transfer of acetyl from acetyl-CoA to desacetylmycothiol (Cys-GlcN-Ins) to form mycothiol. The sequence is that of Mycothiol acetyltransferase from Mycobacteroides abscessus (strain ATCC 19977 / DSM 44196 / CCUG 20993 / CIP 104536 / JCM 13569 / NCTC 13031 / TMC 1543 / L948) (Mycobacterium abscessus).